The primary structure comprises 143 residues: D-aminoacyl-tRNA deacylase (143 aa).

The Gly-cisPro motif, important for rejection of L-amino acids signature appears at G135–P136.

Belongs to the DTD family. As to quaternary structure, homodimer.

The protein localises to the cytoplasm. The enzyme catalyses glycyl-tRNA(Ala) + H2O = tRNA(Ala) + glycine + H(+). It carries out the reaction a D-aminoacyl-tRNA + H2O = a tRNA + a D-alpha-amino acid + H(+). An aminoacyl-tRNA editing enzyme that deacylates mischarged D-aminoacyl-tRNAs. Also deacylates mischarged glycyl-tRNA(Ala), protecting cells against glycine mischarging by AlaRS. Acts via tRNA-based rather than protein-based catalysis; rejects L-amino acids rather than detecting D-amino acids in the active site. By recycling D-aminoacyl-tRNA to D-amino acids and free tRNA molecules, this enzyme counteracts the toxicity associated with the formation of D-aminoacyl-tRNA entities in vivo and helps enforce protein L-homochirality. This chain is D-aminoacyl-tRNA deacylase, found in Mycolicibacterium paratuberculosis (strain ATCC BAA-968 / K-10) (Mycobacterium paratuberculosis).